Reading from the N-terminus, the 857-residue chain is Inactive rhomboid protein 1 (857 aa).

Residues 1–413 are Cytoplasmic-facing; it reads MAELRRDSTS…HRPFFTYWIT (413 aa). Residues 283 to 307 form a disordered region; sequence FESPSDSTMKDVDSKQLDESELTGS. The segment covering 290-300 has biased composition (basic and acidic residues); it reads TMKDVDSKQLD. A helical transmembrane segment spans residues 414 to 434; the sequence is FVHILITILAVCIYGIAPVGF. At 435-661 the chain is on the lumenal side; that stretch reads SQHETVDSVL…PDQFYRLWLS (227 aa). Asn585 is a glycosylation site (N-linked (GlcNAc...) asparagine). Residues 662–682 form a helical membrane-spanning segment; the sequence is LFLHAGILHCLVSVCFQMTIL. At 683–693 the chain is on the cytoplasmic side; that stretch reads RDLEKLAGWLR. A helical transmembrane segment spans residues 694-714; it reads ISIIYILSGITGNLASAIFLP. Over 715–716 the chain is Lumenal; that stretch reads YR. A helical membrane pass occupies residues 717-737; it reads AEVGPAGSQFGILACLFVELI. The Cytoplasmic portion of the chain corresponds to 738-748; the sequence is QSWQILAQPWR. Residues 749-769 form a helical membrane-spanning segment; that stretch reads AFTKLLCVVLFLFAFGLLPWI. Residues 770–774 lie on the Lumenal side of the membrane; that stretch reads DNFAH. A helical transmembrane segment spans residues 775–795; that stretch reads ISGFISGFFLSFAFLPYISFG. At 796–805 the chain is on the cytoplasmic side; sequence RLDMYRKRCQ. The helical transmembrane segment at 806-826 threads the bilayer; that stretch reads IIIFLVVFLGLFAGLVVLFYV. The Lumenal segment spans residues 827–857; sequence HPIKCEWCELLTCIPFTDKFCEKYDLNAHLH.

This sequence belongs to the peptidase S54 family.

The protein resides in the endoplasmic reticulum membrane. Its subcellular location is the golgi apparatus membrane. Its function is as follows. Regulates ADAM17 protease, a sheddase of the epidermal growth factor (EGF) receptor ligands and TNF, thereby plays a role in sleep, cell survival, proliferation, migration and inflammation. Does not exhibit any protease activity on its own. The protein is Inactive rhomboid protein 1 (rhbdf1) of Danio rerio (Zebrafish).